The following is a 374-amino-acid chain: RNA binding protein fox-1 homolog 3 (374 aa).

Pro residues predominate over residues 1-29 (MAQPYPPAQYPPPPQNGIPAEYAPPPPHP). The tract at residues 1-105 (MAQPYPPAQY…QQPKRLHVSN (105 aa)) is disordered. The segment covering 49–74 (TPAQTHPEQPGTEASTQPIAGTQTVP) has biased composition (polar residues). Residues 99-175 (KRLHVSNIPF…RKIEVNNATA (77 aa)) form the RRM domain. At Arg223 the chain carries Asymmetric dimethylarginine; alternate. Residue Arg223 is modified to Omega-N-methylarginine; alternate. Arg319 carries the asymmetric dimethylarginine modification.

In terms of processing, phosphorylated. Widely expressed in brain, including in cerebral cortex, hippocampus, thalamus, caudate/putamen, cerebellum, as well as in the spinal cord (at protein level). Not expressed in all neuronal cells within a region, in cerebellum, expression is absent in Purkinje cells (at protein level). Expressed in the retina in the ganglion cells and some cells in the inner nuclear layer, but absent from the photoreceptor cells and most cells in the inner nuclear layer (at protein level).

Its subcellular location is the nucleus. The protein resides in the cytoplasm. In terms of biological role, pre-mRNA alternative splicing regulator. Regulates alternative splicing of RBFOX2 to enhance the production of mRNA species that are targeted for nonsense-mediated decay (NMD). In Mus musculus (Mouse), this protein is RNA binding protein fox-1 homolog 3 (Rbfox3).